The primary structure comprises 69 residues: Putative membrane protein insertion efficiency factor (69 aa).

Belongs to the UPF0161 family.

Its subcellular location is the cell membrane. In terms of biological role, could be involved in insertion of integral membrane proteins into the membrane. The protein is Putative membrane protein insertion efficiency factor of Alkaliphilus metalliredigens (strain QYMF).